The chain runs to 383 residues: Chitinase-3-like protein 1 (383 aa).

An N-terminal signal peptide occupies residues 1-21; sequence MGLRAAHTGFVVLVLLQSCAA. Residues 22-383 enclose the GH18 domain; the sequence is YKLICYYTSW…SAIKDVLARV (362 aa). Cysteine 26 and cysteine 51 are joined by a disulfide. The N-linked (GlcNAc...) asparagine glycan is linked to asparagine 60. Chitin-binding positions include 70–71, 97–100, tyrosine 141, 204–207, and arginine 263; these read EW, GGWN, and LTYD. Cysteine 300 and cysteine 364 are joined by a disulfide. The important for AKT1 activation and IL8 production stretch occupies residues 324 to 338; sequence QWVAYDDQESVKNKA. Position 352 (tryptophan 352) interacts with chitin. Residue asparagine 367 is glycosylated (N-linked (GlcNAc...) asparagine).

Belongs to the glycosyl hydrolase 18 family. As to quaternary structure, monomer. Post-translationally, glycosylated. As to expression, mammary secretions collected during the non-lactating period.

The protein localises to the secreted. It localises to the extracellular space. The protein resides in the cytoplasm. It is found in the perinuclear region. Its subcellular location is the endoplasmic reticulum. Functionally, carbohydrate-binding lectin with a preference for chitin. Has no chitinase activity. May play a role in tissue remodeling and in the capacity of cells to respond to and cope with changes in their environment. Plays a role in T-helper cell type 2 (Th2) inflammatory response and IL-13-induced inflammation, regulating allergen sensitization, inflammatory cell apoptosis, dendritic cell accumulation and M2 macrophage differentiation. Facilitates invasion of pathogenic enteric bacteria into colonic mucosa and lymphoid organs. Mediates activation of AKT1 signaling pathway and subsequent IL8 production in colonic epithelial cells. Regulates antibacterial responses in lung by contributing to macrophage bacterial killing, controlling bacterial dissemination and augmenting host tolerance. Also regulates hyperoxia-induced injury, inflammation and epithelial apoptosis in lung. The protein is Chitinase-3-like protein 1 (CHI3L1) of Bos taurus (Bovine).